A 77-amino-acid polypeptide reads, in one-letter code: uncharacterized protein (77 aa).

This is an uncharacterized protein from Saccharomyces cerevisiae (strain ATCC 204508 / S288c) (Baker's yeast).